We begin with the raw amino-acid sequence, 480 residues long: Glycogen synthase (480 aa).

K15 provides a ligand contact to ADP-alpha-D-glucose.

This sequence belongs to the glycosyltransferase 1 family. Bacterial/plant glycogen synthase subfamily.

It carries out the reaction [(1-&gt;4)-alpha-D-glucosyl](n) + ADP-alpha-D-glucose = [(1-&gt;4)-alpha-D-glucosyl](n+1) + ADP + H(+). It functions in the pathway glycan biosynthesis; glycogen biosynthesis. In terms of biological role, synthesizes alpha-1,4-glucan chains using ADP-glucose. The polypeptide is Glycogen synthase (Rhizobium johnstonii (strain DSM 114642 / LMG 32736 / 3841) (Rhizobium leguminosarum bv. viciae)).